We begin with the raw amino-acid sequence, 220 residues long: Riboflavin kinase (220 aa).

An H-T-H motif-like region spans residues 1–92 (MDTSDQYYRA…LSRILSIKSN (92 aa)). The segment at 93–220 (IVMTGIVVPG…GDEVTIEVTA (128 aa)) is riboflavin kinase. 102-107 (GMGEGK) contacts CDP. Mg(2+)-binding residues include Thr131 and Asn133. The FMN site is built by Thr188 and Glu195. Residue 200–203 (KYLR) coordinates CDP.

This sequence belongs to the archaeal riboflavin kinase family. It depends on Mg(2+) as a cofactor.

The catalysed reaction is riboflavin + CTP = CDP + FMN + H(+). It functions in the pathway cofactor biosynthesis; FMN biosynthesis; FMN from riboflavin (CTP route): step 1/1. In terms of biological role, catalyzes the CTP-dependent phosphorylation of riboflavin (vitamin B2) to form flavin mononucleotide (FMN). This is Riboflavin kinase (ribK) from Thermoplasma volcanium (strain ATCC 51530 / DSM 4299 / JCM 9571 / NBRC 15438 / GSS1).